Reading from the N-terminus, the 468-residue chain is 6-phospho-beta-galactosidase (468 aa).

Residues Gln-19, His-116, Asn-159, Glu-160, and Asn-297 each contribute to the D-galactose 6-phosphate site. The active-site Proton donor is the Glu-160. The Nucleophile role is filled by Glu-375. D-galactose 6-phosphate contacts are provided by Ser-428, Trp-429, Lys-435, and Tyr-437.

Belongs to the glycosyl hydrolase 1 family.

It carries out the reaction a 6-phospho-beta-D-galactoside + H2O = D-galactose 6-phosphate + an alcohol. It participates in carbohydrate metabolism; lactose degradation; D-galactose 6-phosphate and beta-D-glucose from lactose 6-phosphate: step 1/1. In Streptococcus pyogenes serotype M2 (strain MGAS10270), this protein is 6-phospho-beta-galactosidase.